A 614-amino-acid polypeptide reads, in one-letter code: Probable ATP-dependent RNA helicase DDX5 (614 aa).

Over residues 1–15 the composition is skewed to basic and acidic residues; it reads MSGYSSDRDRGRDRG. The tract at residues 1 to 39 is disordered; the sequence is MSGYSSDRDRGRDRGFGAPRFGGSRAGPLSGKKFGNPGE. Ser24 bears the Phosphoserine mark. Lys32 bears the N6-acetyllysine; alternate mark. Residue Lys32 forms a Glycyl lysine isopeptide (Lys-Gly) (interchain with G-Cter in SUMO2); alternate linkage. N6-acetyllysine occurs at positions 33 and 40. Lys45 is covalently cross-linked (Glycyl lysine isopeptide (Lys-Gly) (interchain with G-Cter in SUMO2)). A Glycyl lysine isopeptide (Lys-Gly) (interchain with G-Cter in SUMO2); alternate cross-link involves residue Lys53. A Glycyl lysine isopeptide (Lys-Gly) (interchain with G-Cter in SUMO); alternate cross-link involves residue Lys53. Lys53 participates in a covalent cross-link: Glycyl lysine isopeptide (Lys-Gly) (interchain with G-Cter in SUMO1); alternate. The Q motif signature appears at 94-122; that stretch reads LNFYEANFPANVMDVIARQNFTEPTAIQA. Residues 114-116, Gln121, and 138-145 each bind ATP; these read FTE and AQTGSGKT. A Helicase ATP-binding domain is found at 125-300; sequence WPVALSGLDM…EDFLKDYIHI (176 aa). The residue at position 236 (Lys236) is an N6-acetyllysine. The DEAD box signature appears at 248 to 251; the sequence is DEAD. Tyr297 is modified (phosphotyrosine). Residues 328–475 form the Helicase C-terminal domain; sequence KLIRLMEEIM…AINPKLLQLV (148 aa). Glycyl lysine isopeptide (Lys-Gly) (interchain with G-Cter in SUMO2) cross-links involve residues Lys340, Lys343, Lys388, Lys391, Lys411, Lys437, Lys451, and Lys470. The tract at residues 477–504 is disordered; sequence DRGSGRSRGRGGMKDDRRDRYSAGKRGG. The tract at residues 477 to 614 is transactivation domain; sequence DRGSGRSRGR…GYPMPTGYSQ (138 aa). Phosphoserine is present on Ser480. Basic and acidic residues predominate over residues 488–498; sequence GMKDDRRDRYS. Ser520 is modified (phosphoserine). A Glycyl lysine isopeptide (Lys-Gly) (interchain with G-Cter in SUMO2) cross-link involves residue Lys523.

It belongs to the DEAD box helicase family. DDX5/DBP2 subfamily. As to quaternary structure, identified in the spliceosome C complex. Component of a ribonucleoprotein complex containing mRNAs and RNA-binding proteins including DDX5, HNRNPH2 and SRSF1 as well as splicing regulator ARVCF. Interacts with RBM4; the interaction occurs in an RNA-independent manner. Interacts with AGO1 and AGO2. Interacts with ESR1, AR, EP300, CREBBP, POLR2A, TP53, RUNX2 and HDAC1. Self-associates. Interacts with DDX17. Interacts with BRDT. The large PER complex involved in the repression of transcriptional termination is composed of at least PER2, CDK9, DDX5, DHX9, NCBP1 and POLR2A (active). Interacts with DHX36; this interaction occurs in a RNA-dependent manner. Interacts with NUPR1. Interacts with ERCC6. Interacts with DDX3X in the cytoplasm; this interaction may be more efficient when both proteins are unphosphorylated. In terms of processing, arg-502 is dimethylated, probably to asymmetric dimethylarginine. Sumoylated; sumoylation, promoted by PIAS1, promotes interaction with HDAC1 and transcriptional repression activity. Sumoylation also significantly increases stability, and reduces polyubiquitination. Post-translationally, polyubiquitinated, leading to proteasomal degradation. In terms of processing, weakly phosphorylated in the G1/S phase of the cell cycle and much more at G2/M, especially at Thr and Tyr residues.

It localises to the nucleus. The protein localises to the nucleolus. Its subcellular location is the nucleus speckle. The protein resides in the cytoplasm. The catalysed reaction is ATP + H2O = ADP + phosphate + H(+). Its function is as follows. Involved in the alternative regulation of pre-mRNA splicing; its RNA helicase activity is necessary for increasing tau exon 10 inclusion and occurs in a RBM4-dependent manner. Binds to the tau pre-mRNA in the stem-loop region downstream of exon 10. The rate of ATP hydrolysis is highly stimulated by single-stranded RNA. Involved in transcriptional regulation; the function is independent of the RNA helicase activity. Transcriptional coactivator for androgen receptor AR but probably not ESR1. Synergizes with DDX17 and SRA1 RNA to activate MYOD1 transcriptional activity and involved in skeletal muscle differentiation. Transcriptional coactivator for p53/TP53 and involved in p53/TP53 transcriptional response to DNA damage and p53/TP53-dependent apoptosis. Transcriptional coactivator for RUNX2 and involved in regulation of osteoblast differentiation. Acts as a transcriptional repressor in a promoter-specific manner; the function probably involves association with histone deacetylases, such as HDAC1. As component of a large PER complex is involved in the inhibition of 3' transcriptional termination of circadian target genes such as PER1 and NR1D1 and the control of the circadian rhythms. This Homo sapiens (Human) protein is Probable ATP-dependent RNA helicase DDX5 (DDX5).